A 340-amino-acid polypeptide reads, in one-letter code: Delta-aminolevulinic acid dehydratase (340 aa).

Cys-133, Cys-135, and Cys-143 together coordinate Zn(2+). The active-site Schiff-base intermediate with substrate is Lys-210. Residues Arg-220 and Arg-232 each coordinate 5-aminolevulinate. Residue Lys-263 is the Schiff-base intermediate with substrate of the active site. Positions 290 and 329 each coordinate 5-aminolevulinate.

This sequence belongs to the ALAD family. As to quaternary structure, homooctamer. Zn(2+) is required as a cofactor.

It catalyses the reaction 2 5-aminolevulinate = porphobilinogen + 2 H2O + H(+). Its pathway is porphyrin-containing compound metabolism; protoporphyrin-IX biosynthesis; coproporphyrinogen-III from 5-aminolevulinate: step 1/4. In terms of biological role, catalyzes an early step in the biosynthesis of tetrapyrroles. Binds two molecules of 5-aminolevulinate per subunit, each at a distinct site, and catalyzes their condensation to form porphobilinogen. The sequence is that of Delta-aminolevulinic acid dehydratase (HEM2) from Candida glabrata (strain ATCC 2001 / BCRC 20586 / JCM 3761 / NBRC 0622 / NRRL Y-65 / CBS 138) (Yeast).